The chain runs to 120 residues: Ig heavy chain V region AC38 15.3 (120 aa).

A v segment region spans residues 1–98 (QVQLLQPGTE…EDSAVYYCAR (98 aa)). The cysteines at positions 22 and 96 are disulfide-linked. A d segment region spans residues 99–105 (WDYEGDR). The tract at residues 106–120 (YFDVWGTGTTVTVSS) is j segment.

In Mus musculus (Mouse), this protein is Ig heavy chain V region AC38 15.3.